We begin with the raw amino-acid sequence, 168 residues long: Cyclic pyranopterin monophosphate synthase (168 aa).

Substrate-binding positions include 83–85 (LCH) and 121–122 (ME). Residue Asp136 is part of the active site.

It belongs to the MoaC family. Homohexamer; trimer of dimers.

The catalysed reaction is (8S)-3',8-cyclo-7,8-dihydroguanosine 5'-triphosphate = cyclic pyranopterin phosphate + diphosphate. Its pathway is cofactor biosynthesis; molybdopterin biosynthesis. In terms of biological role, catalyzes the conversion of (8S)-3',8-cyclo-7,8-dihydroguanosine 5'-triphosphate to cyclic pyranopterin monophosphate (cPMP). The sequence is that of Cyclic pyranopterin monophosphate synthase from Nostoc sp. (strain PCC 7120 / SAG 25.82 / UTEX 2576).